A 748-amino-acid polypeptide reads, in one-letter code: Acyl-coenzyme A oxidase (748 aa).

It belongs to the acyl-CoA oxidase family. The cofactor is FAD.

The protein resides in the peroxisome. The enzyme catalyses a 2,3-saturated acyl-CoA + O2 = a (2E)-enoyl-CoA + H2O2. The protein operates within lipid metabolism; peroxisomal fatty acid beta-oxidation. The polypeptide is Acyl-coenzyme A oxidase (POX1) (Candida glabrata (strain ATCC 2001 / BCRC 20586 / JCM 3761 / NBRC 0622 / NRRL Y-65 / CBS 138) (Yeast)).